The sequence spans 217 residues: Transmembrane emp24 domain-containing protein p24delta6 (217 aa).

Residues 1–26 form the signal peptide; that stretch reads MAISPVLFIGLIYLAGGGSLFPGVEA. The Lumenal segment spans residues 27-186; the sequence is IWLTVPESGE…INEKTNTRVN (160 aa). The 117-residue stretch at 36-152 folds into the GOLD domain; that stretch reads ERCVYEEIQA…IEGVELEIRR (117 aa). N-linked (GlcNAc...) asparagine glycosylation is found at Asn84 and Asn116. The stretch at 138 to 160 forms a coiled coil; that stretch reads AKKEKIEGVELEIRRSTEYASAI. Residues Arg170 and Arg175 each carry the omega-N-methylated arginine modification. The helical transmembrane segment at 187-207 threads the bilayer; that stretch reads QLGLMSLGVAIVVSISQVLYL. Topologically, residues 208-217 are cytoplasmic; that stretch reads KRYFLKKKLI. The COPII vesicle coat-binding motif lies at 210–211; that stretch reads YF. Positions 210-217 match the COPI vesicle coat-binding motif; sequence YFLKKKLI.

This sequence belongs to the EMP24/GP25L family. In terms of assembly, probably oligomerizes with other members of the EMP24/GP25L family. Associates with the COPI vesicle coat (coatomer). Associates with the COPII vesicle coat (coatomer).

Its subcellular location is the endoplasmic reticulum membrane. In terms of biological role, involved in vesicular protein trafficking. Mainly functions in the early secretory pathway. Thought to act as cargo receptor at the lumenal side for incorporation of secretory cargo molecules into transport vesicles and to be involved in vesicle coat formation at the cytoplasmic side. The chain is Transmembrane emp24 domain-containing protein p24delta6 from Arabidopsis thaliana (Mouse-ear cress).